The chain runs to 252 residues: Mitochondrial cardiolipin hydrolase (252 aa).

Topologically, residues 1-4 (MGRL) are mitochondrial intermembrane. Positions 1–39 (MGRLSWQVAAAAAVGLALTLEALPWVLRWLRSRRRRPRR) are required for mitochondrial localization. The chain crosses the membrane as a helical span at residues 5–27 (SWQVAAAAAVGLALTLEALPWVL). Residues 28-252 (RWLRSRRRRP…TCGTSSESQT (225 aa)) are Cytoplasmic-facing. Residues 45–78 (PSQVTCTEALLRAPGAELAELPEGCPCGLPHGES) form a C3H1-type; atypical zinc finger. A PLD phosphodiesterase domain is found at 151–178 (DPGYMHHKFAIVDKRVLITGSLNWTTQA). Catalysis depends on residues His-156, Lys-158, and Asp-163.

This sequence belongs to the phospholipase D family. MitoPLD/Zucchini subfamily. Homodimer. Interacts with MOV10L1. Interacts with MIGA1 and MIGA2; possibly facilitating homodimer formation. Interacts with GK2. Predominantly expressed in testis and ovary, but not limited to gonads (at protein level). It is also found in brain, heart, pituitary gland, prostate, pancreas, thyroid, bone marrow, lung and muscle.

It localises to the mitochondrion outer membrane. The protein resides in the golgi apparatus. The enzyme catalyses a cardiolipin + H2O = a 1,2-diacyl-sn-glycero-3-phospho-(1'-sn-glycerol) + a 1,2-diacyl-sn-glycero-3-phosphate + H(+). MYC stimulates its phospholipase activity. MIGA1 and MIGA2 increase PLD6 self-association affinity and affects the homodimer conformation facilitating its phospholipase activity over the nuclease activity. Single stranded DNA (ssDNA) hydrolase activity does not depend upon, but is stimulated by the presence of Ca(2+) and Mn(2+). Presents phospholipase and nuclease activities, depending on the different physiological conditions. Interaction with Mitoguardin (MIGA1 or MIGA2) affects the dimer conformation, facilitating the lipase activity over the nuclease activity. Plays a key role in mitochondrial fusion and fission via its phospholipase activity. In its phospholipase role, it uses the mitochondrial lipid cardiolipin as substrate to generate phosphatidate (PA or 1,2-diacyl-sn-glycero-3-phosphate), a second messenger signaling lipid. Production of PA facilitates Mitofusin-mediated fusion, whereas the cleavage of PA by the Lipin family of phosphatases produces diacylgycerol (DAG) which promotes mitochondrial fission. Both Lipin and DAG regulate mitochondrial dynamics and membrane fusion/fission, important processes for adapting mitochondrial metabolism to changes in cell physiology. Mitochondrial fusion enables cells to cope with the increased nucleotide demand during DNA synthesis. Mitochondrial function and dynamics are closely associated with biological processes such as cell growth, proliferation, and differentiation. Mediator of MYC activity, promotes mitochondrial fusion and activates AMPK which in turn inhibits YAP/TAZ, thereby inducing cell growth and proliferation. The endonuclease activity plays a critical role in PIWI-interacting RNA (piRNA) biogenesis during spermatogenesis. Implicated in spermatogenesis and sperm fertility in testicular germ cells, its single strand-specific nuclease activity is critical for the biogenesis/maturation of PIWI-interacting RNA (piRNA). MOV10L1 selectively binds to piRNA precursors and funnels them to the endonuclease that catalyzes the first cleavage step of piRNA processing to generate piRNA intermediate fragments that are subsequently loaded to Piwi proteins. Cleaves either DNA or RNA substrates with similar affinity, producing a 5' phosphate end, in this way it participates in the processing of primary piRNA transcripts. piRNAs provide essential protection against the activity of mobile genetic elements. piRNA-mediated transposon silencing is thus critical for maintaining genome stability, in particular in germline cells when transposons are mobilized as a consequence of wide-spread genomic demethylation. PA may act as signaling molecule in the recognition/transport of the precursor RNAs of primary piRNAs. Interacts with tesmin in testes, suggesting a role in spermatogenesis via association with its interacting partner. The polypeptide is Mitochondrial cardiolipin hydrolase (PLD6) (Homo sapiens (Human)).